The following is a 230-amino-acid chain: 7-cyano-7-deazaguanine synthase (230 aa).

16–26 (LSGGLDSMVSG) serves as a coordination point for ATP. Residues Cys-195, Cys-205, Cys-208, and Cys-211 each contribute to the Zn(2+) site.

This sequence belongs to the QueC family. The cofactor is Zn(2+).

The enzyme catalyses 7-carboxy-7-deazaguanine + NH4(+) + ATP = 7-cyano-7-deazaguanine + ADP + phosphate + H2O + H(+). The protein operates within purine metabolism; 7-cyano-7-deazaguanine biosynthesis. Functionally, catalyzes the ATP-dependent conversion of 7-carboxy-7-deazaguanine (CDG) to 7-cyano-7-deazaguanine (preQ(0)). The sequence is that of 7-cyano-7-deazaguanine synthase from Rhizorhabdus wittichii (strain DSM 6014 / CCUG 31198 / JCM 15750 / NBRC 105917 / EY 4224 / RW1) (Sphingomonas wittichii).